A 337-amino-acid chain; its full sequence is F420-dependent glucose-6-phosphate dehydrogenase 2 (337 aa).

D40 is a coenzyme F420-(gamma-Glu)n binding site. H41 functions as the Proton donor in the catalytic mechanism. Residues T77 and 108–109 (TG) each bind coenzyme F420-(gamma-Glu)n. The active-site Proton acceptor is E110. Coenzyme F420-(gamma-Glu)n is bound by residues N113, 178 to 179 (GG), and 181 to 182 (VV). The substrate site is built by T196, K199, K260, and R284.

It belongs to the F420-dependent glucose-6-phosphate dehydrogenase family. In terms of assembly, homodimer.

The catalysed reaction is oxidized coenzyme F420-(gamma-L-Glu)(n) + D-glucose 6-phosphate + H(+) = 6-phospho-D-glucono-1,5-lactone + reduced coenzyme F420-(gamma-L-Glu)(n). In terms of biological role, catalyzes the coenzyme F420-dependent oxidation of glucose 6-phosphate (G6P) to 6-phosphogluconolactone. The polypeptide is F420-dependent glucose-6-phosphate dehydrogenase 2 (Rhodococcus jostii (strain RHA1)).